Reading from the N-terminus, the 201-residue chain is Ribosome maturation factor RimP (201 aa).

The protein belongs to the RimP family.

The protein localises to the cytoplasm. Required for maturation of 30S ribosomal subunits. In Acidiphilium cryptum (strain JF-5), this protein is Ribosome maturation factor RimP.